Reading from the N-terminus, the 669-residue chain is UvrABC system protein B (669 aa).

Residues 27–414 (ESLQGEHKFQ…EARVIEQVIR (388 aa)) enclose the Helicase ATP-binding domain. An ATP-binding site is contributed by 40–47 (GATGTGKT). A Beta-hairpin motif is present at residues 93–116 (YYDYYQPEAYIPVTDTYIEKTASI). The Helicase C-terminal domain maps to 431–597 (QVDDLYGEIQ…PINKRANNAI (167 aa)). Residues 628 to 663 (PDLIQQLEEKMQEAAKKQEFEVAAIYRDRIQHLRDR) form the UVR domain.

It belongs to the UvrB family. As to quaternary structure, forms a heterotetramer with UvrA during the search for lesions. Interacts with UvrC in an incision complex.

Its subcellular location is the cytoplasm. In terms of biological role, the UvrABC repair system catalyzes the recognition and processing of DNA lesions. A damage recognition complex composed of 2 UvrA and 2 UvrB subunits scans DNA for abnormalities. Upon binding of the UvrA(2)B(2) complex to a putative damaged site, the DNA wraps around one UvrB monomer. DNA wrap is dependent on ATP binding by UvrB and probably causes local melting of the DNA helix, facilitating insertion of UvrB beta-hairpin between the DNA strands. Then UvrB probes one DNA strand for the presence of a lesion. If a lesion is found the UvrA subunits dissociate and the UvrB-DNA preincision complex is formed. This complex is subsequently bound by UvrC and the second UvrB is released. If no lesion is found, the DNA wraps around the other UvrB subunit that will check the other stand for damage. This Synechocystis sp. (strain ATCC 27184 / PCC 6803 / Kazusa) protein is UvrABC system protein B.